The sequence spans 120 residues: Large ribosomal subunit protein eL18 (120 aa).

It belongs to the eukaryotic ribosomal protein eL18 family.

This Thermococcus onnurineus (strain NA1) protein is Large ribosomal subunit protein eL18.